The chain runs to 288 residues: Beta-lactamase CARB-4 (288 aa).

Positions 1–17 (MKLLLVFSLLIPSMVFA) are cleaved as a signal peptide. Residue Ser-65 is the Acyl-ester intermediate of the active site. Cys-72 and Cys-118 are joined by a disulfide. 229-231 (RSG) is a binding site for substrate.

The protein belongs to the class-A beta-lactamase family.

It carries out the reaction a beta-lactam + H2O = a substituted beta-amino acid. With respect to regulation, inhibited by clavulanic acid and sulbactam. Hydrolyzes carbenicillin. Methicillin and oxacillin are weakly hydrolyzed. The polypeptide is Beta-lactamase CARB-4 (carB4) (Pseudomonas aeruginosa).